The following is a 238-amino-acid chain: MIFPAIDLLNGQSVRLYQGDYEKETTINPDPLKQAKQIESAGLKHLHLVDLDGAKEGKPVNLNVIQSLREQTNLFIELGGGIRTLEQVNQYLNIGINRVIIGSAALTHPELVRTAVAKYGSDKIVVGVDGRDEKVATQGWLENSDTSFDDIVEAMLSVGVSNFVVTDIARDGTLSGPNIELLSRLQNKFPKSNIIASGGIANIKNVTDLQASGIHDIIVGRALYDGDVTLAQLKEVDG.

The Proton acceptor role is filled by Asp-7. Asp-129 (proton donor) is an active-site residue.

The protein belongs to the HisA/HisF family.

It is found in the cytoplasm. The catalysed reaction is 1-(5-phospho-beta-D-ribosyl)-5-[(5-phospho-beta-D-ribosylamino)methylideneamino]imidazole-4-carboxamide = 5-[(5-phospho-1-deoxy-D-ribulos-1-ylimino)methylamino]-1-(5-phospho-beta-D-ribosyl)imidazole-4-carboxamide. The protein operates within amino-acid biosynthesis; L-histidine biosynthesis; L-histidine from 5-phospho-alpha-D-ribose 1-diphosphate: step 4/9. This is 1-(5-phosphoribosyl)-5-[(5-phosphoribosylamino)methylideneamino] imidazole-4-carboxamide isomerase from Leuconostoc mesenteroides subsp. mesenteroides (strain ATCC 8293 / DSM 20343 / BCRC 11652 / CCM 1803 / JCM 6124 / NCDO 523 / NBRC 100496 / NCIMB 8023 / NCTC 12954 / NRRL B-1118 / 37Y).